The chain runs to 197 residues: Inner membrane-spanning protein YciB (197 aa).

The next 5 membrane-spanning stretches (helical) occupy residues 36–56 (IYSATAMLIISSLVVYGALFL), 64–84 (GQWLTLIACLVFGGLTLTFHS), 90–110 (WKAPVVNWLFALGFAGSHFIG), 135–155 (LAWIAFFLFCGAANLFVAFTF), and 162–182 (FKVFGSLGMTVIFLVAQGVYL).

This sequence belongs to the YciB family.

Its subcellular location is the cell inner membrane. Functionally, plays a role in cell envelope biogenesis, maintenance of cell envelope integrity and membrane homeostasis. The chain is Inner membrane-spanning protein YciB from Pseudomonas putida (strain GB-1).